A 1104-amino-acid polypeptide reads, in one-letter code: Transient receptor potential cation channel subfamily M member 8 (1104 aa).

The segment at 1–22 (MSFEGARLSMRSRRNGTMGSTR) is disordered. The Cytoplasmic segment spans residues 1–733 (MSFEGARLSM…LWYYVAFFTS (733 aa)). The helical transmembrane segment at 734–758 (PFVVFSWNVVFYIAFLLLFAYVLLM) threads the bilayer. Residues 759 to 765 (DFHSVPH) are Extracellular-facing. A helical transmembrane segment spans residues 766 to 789 (TPELILYALVFVLFCDEVRQWYMN). Ca(2+)-binding residues include E782 and Q785. At 790–796 (GVNYFTD) the chain is on the cytoplasmic side. The helical transmembrane segment at 797–817 (LWNVMDTLGLFYFIAGIVFRL) threads the bilayer. Residues N799 and D802 each coordinate Ca(2+). Residues 818–822 (HSSNK) lie on the Extracellular side of the membrane. A helical transmembrane segment spans residues 823–848 (SSLYSGRVIFCLDYIIFTLRLIHIFT). At 849–853 (VSRNL) the chain is on the cytoplasmic side. The chain crosses the membrane as a helical span at residues 854 to 890 (GPKIIMLQRMLIDVFFFLFLFAVWMVAFGVARQGILR). Topologically, residues 891-895 (QNEQR) are extracellular. Positions 896-912 (WRWIFRSVIYEPYLAMF) form an intramembrane region, pore-forming. At 913–953 (GQVPSDVDSTTYDFSHCTFSGNESKPLCVELDEHNLPRFPE) the chain is on the extracellular side. N934 is a glycosylation site (N-linked (GlcNAc...) (complex) asparagine). The helical transmembrane segment at 954-984 (WITIPLVCIYMLSTNILLVNLLVAMFGYTVG) threads the bilayer. The Cytoplasmic segment spans residues 985 to 1104 (IVQENNDQVW…LLKEIANNIK (120 aa)). Residues 1069 to 1104 (TKANDNSEEMRHRFRQLDSKLNDLKSLLKEIANNIK) adopt a coiled-coil conformation.

The protein belongs to the transient receptor (TC 1.A.4) family. LTrpC subfamily. TRPM8 sub-subfamily. In terms of assembly, homotetramer. Interacts (via N-terminus and C-terminus domains) with TCAF1; the interaction stimulates TRPM8 channel activity. Interacts (via N-terminus and C-terminus domains) with TCAF2; the interaction inhibits TRPM8 channel activity. Post-translationally, N-glycosylation is not essential for but facilitates cell surface expression, multimerization, association with lipid rafts and ion channel activity. Expressed in dorsal root and trigeminal ganglia. Specifically expressed in a subset of pain- and temperature-sensing neurons. Not expressed in heavily myelinated neurons. Not expressed in neurons expressing TRPA1 or TRPV1.

It is found in the cell membrane. The protein localises to the membrane raft. The catalysed reaction is Ca(2+)(in) = Ca(2+)(out). The enzyme catalyses Na(+)(in) = Na(+)(out). It carries out the reaction K(+)(in) = K(+)(out). Its activity is regulated as follows. Activated by cold temperatures and by both natural and synthetic cooling compounds such as menthol and icilin. Activation of the channel requires the presence of PI(4,5)P2; PI(4,5)P2 is necessary to gate the channel. Activated by intracellular Ca(2+). Functionally, non-selective ion channel permeable to monovalent and divalent cations, including Na(+), K(+), and Ca(2+), with higher permeability for Ca(2+). Activated by multiple factors, such as temperature, voltage, pressure, and changes in osmolality. Activated by cool temperatures (&lt;23-28 degrees Celsius) and by chemical ligands evoking a sensation of coolness, such as menthol and icilin, therefore plays a central role in the detection of environmental cold temperatures. TRPM8 is a voltage-dependent channel; its activation by cold or chemical ligands shifts its voltage thresholds towards physiological membrane potentials, leading to the opening of the channel. In addition to its critical role in temperature sensing, regulates basal tear secretion by sensing evaporation-induced cooling and changes in osmolality. This chain is Transient receptor potential cation channel subfamily M member 8 (Trpm8), found in Mus musculus (Mouse).